Reading from the N-terminus, the 228-residue chain is MTTAARPTFEPARGGRGKGEGDLSQLSKQYSSRDLPSHTKIKYRQATQDAPEEVRSRDFRRELEERERVVARDKNRDRPTREHTSSVSKKPRLDQIPAANLDADDPLTDEDGDEDSDEDSDDDTAALLAELEKIKKERAEEKDRKELEQKAEEERIRMENILSGNPLLNLTGPAAQSQASFKVKRRWDDDVVFKNCAKGVDEMKKQKRFVNDTLRSEFHKKFMEKYIK.

The segment at 1–126 is disordered; sequence MTTAARPTFE…DEDSDDDTAA (126 aa). Positions 24–34 are enriched in polar residues; it reads SQLSKQYSSRD. Over residues 52 to 84 the composition is skewed to basic and acidic residues; it reads EEVRSRDFRRELEERERVVARDKNRDRPTREHT. The span at 102–124 shows a compositional bias: acidic residues; it reads DADDPLTDEDGDEDSDEDSDDDT. The stretch at 121 to 165 forms a coiled coil; the sequence is DDDTAALLAELEKIKKERAEEKDRKELEQKAEEERIRMENILSGN.

It belongs to the CWC15 family. Identified in the spliceosome C complex. Component of the minor spliceosome, which splices U12-type introns.

The protein resides in the nucleus. In terms of biological role, involved in pre-mRNA splicing as component of the spliceosome. The sequence is that of Protein CWC15 homolog A (cwc15-a) from Xenopus laevis (African clawed frog).